The following is a 199-amino-acid chain: MALASSGSGAGLLRFLRLVGQLKRVPRTGWVYRNVEKPESVSDHMYRMAVMAMVTRDDRLNKDRCIRLALVHDMAECIVGDIAPADNIPKEEKHRREEEAMKQITQLLPEDLRKELYELWEEYETQSSEEAKFVKQLDQCEMILQASEYEDLENKPGRLQDFYDSTAGKFSHPEIVQLVSELETERNASMATASAEPGS.

Ala2 carries the N-acetylalanine modification. Ser5 is modified (phosphoserine). Residues 41–143 form the HD domain; sequence VSDHMYRMAV…VKQLDQCEMI (103 aa). His44, His72, Asp73, Glu76, Asp81, Ile82, and Asp138 together coordinate a divalent metal cation. Position 199 is a phosphoserine (Ser199).

Belongs to the HDDC2 family. As to quaternary structure, homodimer. It depends on Mn(2+) as a cofactor. Requires Co(2+) as cofactor. Mg(2+) serves as cofactor.

It carries out the reaction a 2'-deoxyribonucleoside 5'-phosphate + H2O = a 2'-deoxyribonucleoside + phosphate. Functionally, catalyzes the dephosphorylation of the nucleoside 5'-monophosphates deoxyadenosine monophosphate (dAMP), deoxycytidine monophosphate (dCMP), deoxyguanosine monophosphate (dGMP) and deoxythymidine monophosphate (dTMP). This Mus musculus (Mouse) protein is 5'-deoxynucleotidase HDDC2 (Hddc2).